A 226-amino-acid chain; its full sequence is Ribonuclease 3 (226 aa).

The RNase III domain occupies 6–128 (INRLQRKLGY…LIGGIFLDSD (123 aa)). E41 lines the Mg(2+) pocket. Residue D45 is part of the active site. The Mg(2+) site is built by D114 and E117. E117 is an active-site residue. Residues 155–225 (DPKTRLQEYL…AEQALKQLEL (71 aa)) form the DRBM domain.

It belongs to the ribonuclease III family. In terms of assembly, homodimer. Mg(2+) is required as a cofactor.

It is found in the cytoplasm. The enzyme catalyses Endonucleolytic cleavage to 5'-phosphomonoester.. Digests double-stranded RNA. Involved in the processing of primary rRNA transcript to yield the immediate precursors to the large and small rRNAs (23S and 16S). Processes some mRNAs, and tRNAs when they are encoded in the rRNA operon. Processes pre-crRNA and tracrRNA of type II CRISPR loci if present in the organism. This Yersinia enterocolitica serotype O:8 / biotype 1B (strain NCTC 13174 / 8081) protein is Ribonuclease 3.